The sequence spans 514 residues: MAMAAAMGVASPYHAAHAAASTSCDSLRLLVAEGRPRRPRGVASSSSSSSSAGRRRRPLVFSPRAVSDSKSSQTCLDPDASTSVLGIILGGGAGTRLYPLTKKRAKPAVPLGANYRLIDIPVSNCLNSNISKIYVLTQFNSASLNRHLSRAYGNNIGGYKNEGFVEVLAAQQSPDNPNWFQGTADAVRQYLWLFEEHNVMEFLILAGDHLYRMDYEKFIQAHRETDSDITVAALPMDEKRATAFGLMKIDEEGRIVEFAEKPKGEQLKAMMVDTTILGLDDVRAKEMPYIASMGIYVISKNVMLQLLREQFPGANDFGSEVIPGATNIGMRVQAYLYDGYWEDIGTIEAFYNANLGITKKPVPDFSFYDRSAPIYTQPRHLPPSKVLDADVTDSVIGEGCVIKNCKIHHSVVGLRSCISEGAIIEDSLLMGADYYETEADKKLLGEKGGIPIGIGKNCHIRRAIIDKNARIGDNVKIINVDNVQEAARETDGYFIKSGIVTVIKDALLPSGTVI.

A chloroplast-targeting transit peptide spans 1-64 (MAMAAAMGVA…RRRPLVFSPR (64 aa)). The disordered stretch occupies residues 35-74 (RPRRPRGVASSSSSSSSAGRRRRPLVFSPRAVSDSKSSQT). The segment covering 41–52 (GVASSSSSSSSA) has biased composition (low complexity).

It belongs to the bacterial/plant glucose-1-phosphate adenylyltransferase family. In terms of assembly, heterotetramer composed of two small and two large subunits. As to expression, expressed in leaves.

The protein localises to the plastid. It localises to the chloroplast. It is found in the amyloplast. Its subcellular location is the cytoplasm. The protein resides in the cytosol. The enzyme catalyses alpha-D-glucose 1-phosphate + ATP + H(+) = ADP-alpha-D-glucose + diphosphate. Its pathway is glycan biosynthesis; starch biosynthesis. Its activity is regulated as follows. Activated by 3'phosphoglycerate, inhibited by orthophosphate. Allosteric regulation. Inhibited by inorganic phosphate (Pi). Its function is as follows. Involved in synthesis of starch. Catalyzes the synthesis of ADP-glucose, a molecule that serves as an activated glycosyl donor for alpha-1,4-glucan synthesis. The chloroplastic isoform 1 is essential for starch synthesis in leaf chloroplasts and the cytosolic isoform 2 for synthesis in seed endosperm. In Oryza sativa subsp. japonica (Rice), this protein is Glucose-1-phosphate adenylyltransferase small subunit 2, chloroplastic/amyloplastic/cytosolic.